Consider the following 103-residue polypeptide: Large ribosomal subunit protein uL24 (103 aa).

Belongs to the universal ribosomal protein uL24 family. Part of the 50S ribosomal subunit.

Functionally, one of two assembly initiator proteins, it binds directly to the 5'-end of the 23S rRNA, where it nucleates assembly of the 50S subunit. One of the proteins that surrounds the polypeptide exit tunnel on the outside of the subunit. The polypeptide is Large ribosomal subunit protein uL24 (Sinorhizobium medicae (strain WSM419) (Ensifer medicae)).